Reading from the N-terminus, the 166-residue chain is Ribonuclease H (166 aa).

Residues 5–147 (PRKRVALFTD…VDREARRQAQ (143 aa)) enclose the RNase H type-1 domain. Residues Asp14, Glu52, Asp74, and Asp139 each coordinate Mg(2+). The segment at 128–166 (GHTGHPENERVDREARRQAQSQAKTPCPPQAPTLFHEEA) is disordered. Residues 131 to 144 (GHPENERVDREARR) show a composition bias toward basic and acidic residues.

It belongs to the RNase H family. Monomer. Requires Mg(2+) as cofactor.

The protein localises to the cytoplasm. The catalysed reaction is Endonucleolytic cleavage to 5'-phosphomonoester.. In terms of biological role, endonuclease that specifically degrades the RNA of RNA-DNA hybrids. The polypeptide is Ribonuclease H (Thermus thermophilus (strain ATCC BAA-163 / DSM 7039 / HB27)).